A 965-amino-acid polypeptide reads, in one-letter code: PWWP domain-containing protein 4 (965 aa).

The PWWP domain occupies 135 to 196; the sequence is VGDMVWGKVK…PAELIPFEPH (62 aa). Residues 437 to 455 are compositionally biased toward polar residues; it reads MNFTSSSGNIPGKKSSVSK. 4 disordered regions span residues 437-507, 526-577, 649-708, and 905-927; these read MNFT…KSSL, VVKR…KSSQ, SAKT…SLAP, and LSSQDSEPKPVNNQVDHVEPPLD. 2 stretches are compositionally biased toward basic and acidic residues: residues 456 to 474 and 481 to 495; these read LSRDDDKGLAQESDVRMGE and DQEKFEPMKSLKQDE. A compositionally biased stretch (polar residues) spans 496 to 507; that stretch reads TGTNSRSNKSSL. The short motif at 546–553 is the Nuclear localization signal element; the sequence is KKKEYVSE. A compositionally biased stretch (basic and acidic residues) spans 549–563; that stretch reads EYVSELNRDTPDKRK. A compositionally biased stretch (polar residues) spans 657-676; that stretch reads NEQSKAGRNRISSDSQQDVP. Over residues 691 to 702 the composition is skewed to basic and acidic residues; that stretch reads ASDKKTNQDATK. Residues 905-919 show a composition bias toward polar residues; sequence LSSQDSEPKPVNNQV.

Belongs to the PDP family. As to quaternary structure, component of the PRC2 (polycomb repressive complex 2) complex which regulates histone methylation on histone H3K27.

It is found in the nucleus. Its function is as follows. May influence gene expression by regulating the function of the PRC2 complex and modulating H3K27me3 level. The protein is PWWP domain-containing protein 4 of Arabidopsis thaliana (Mouse-ear cress).